The following is a 199-amino-acid chain: Recombination protein RecR (199 aa).

Residues 57-72 (CSSCRTFTEESLCPIC) form a C4-type zinc finger. Positions 81-176 (DLICVVETPA…NVSRIAHGVP (96 aa)) constitute a Toprim domain.

The protein belongs to the RecR family.

Its function is as follows. May play a role in DNA repair. It seems to be involved in an RecBC-independent recombinational process of DNA repair. It may act with RecF and RecO. The chain is Recombination protein RecR from Shewanella loihica (strain ATCC BAA-1088 / PV-4).